The chain runs to 452 residues: tRNA modification GTPase MnmE (452 aa).

Arginine 21, glutamate 78, and lysine 118 together coordinate (6S)-5-formyl-5,6,7,8-tetrahydrofolate. Positions 214 to 375 constitute a TrmE-type G domain; that stretch reads GMKVVIAGRP…LREHLKQAMG (162 aa). Asparagine 224 provides a ligand contact to K(+). GTP is bound by residues 224 to 229, 243 to 249, and 268 to 271; these read NAGKSS, TDIAGTT, and DTAG. Serine 228 contacts Mg(2+). K(+) is bound by residues threonine 243, isoleucine 245, and threonine 248. Threonine 249 is a binding site for Mg(2+). (6S)-5-formyl-5,6,7,8-tetrahydrofolate is bound at residue lysine 452.

This sequence belongs to the TRAFAC class TrmE-Era-EngA-EngB-Septin-like GTPase superfamily. TrmE GTPase family. In terms of assembly, homodimer. Heterotetramer of two MnmE and two MnmG subunits. It depends on K(+) as a cofactor.

The protein resides in the cytoplasm. Functionally, exhibits a very high intrinsic GTPase hydrolysis rate. Involved in the addition of a carboxymethylaminomethyl (cmnm) group at the wobble position (U34) of certain tRNAs, forming tRNA-cmnm(5)s(2)U34. This Haemophilus influenzae (strain PittGG) protein is tRNA modification GTPase MnmE.